We begin with the raw amino-acid sequence, 416 residues long: Basic salivary proline-rich protein 2 (416 aa).

An N-terminal signal peptide occupies residues 1 to 16 (MLLILLSVALLALSSA). Position 17 is a pyrrolidone carboxylic acid (Q17). Over residues 19–28 (LNEDVSQEES) the composition is skewed to polar residues. Positions 19 to 416 (LNEDVSQEES…QGGRPSRPPQ (398 aa)) are disordered. S24 is subject to Phosphoserine. Positions 34–47 (GNPQGAPPQGGNKP) are enriched in low complexity. Pro residues-rich tracts occupy residues 48–104 (QGPP…PPPQ) and 112–165 (RSPP…PPPQ). Position 52 is a phosphoserine (S52). Repeat copies occupy residues 53 to 72 (PPGK…QGPP), 74 to 93 (PPGK…QGPP), 94 to 113 (PPGK…SPRS), 114 to 133 (PPGK…QGPP), 135 to 154 (PPGK…QGPP), 155 to 174 (PPGK…RSSR), 176 to 195 (PPGK…QGPP), 197 to 216 (PPGK…QGPP), 217 to 236 (PPGK…QSAR), 238 to 257 (PPGK…QGPP), 259 to 278 (PPGK…QGPP), 279 to 298 (PPGK…RSSR), 300 to 319 (PPGK…QGPP), 321 to 340 (PPGK…QGPP), and 341 to 360 (PPGK…RSAR). The interval 53 to 360 (PPGKPQGPPP…QGGSKSRSAR (308 aa)) is 15 X 20 AA approximate tandem repeats of P-P-G-K-P-Q-G-P-P-P-Q-G-[GD]-[NKS]-[KSQ]-[PRS]-[QRS] [GPS]-[PSAR]-[PSR]. A glycan (N-linked (GlcNAc...) asparagine) is linked at N168. A compositionally biased stretch (pro residues) spans 177-227 (PGKPQGPPPQGGNQPQGPPPPPGKPQGPPPQGGNKPQGPPPPGKPQGPPPQ). An N-linked (GlcNAc...) asparagine glycan is attached at N230. An O-linked (Hex) serine glycan is attached at S232. Pro residues predominate over residues 239–289 (PGKPQGPPPQGGNQPQGPPPPPGKPQGPPPQGGNKPQGPPPPGKPQGPPPQ). N272 carries N-linked (GlcNAc...) asparagine glycosylation. Over residues 290–300 (GGSKSRSSRSP) the composition is skewed to low complexity. Composition is skewed to pro residues over residues 301–351 (PGKP…PPPQ) and 378–416 (QGPP…RPPQ).

Post-translationally, N- and O-glycosylated. In head and neck cancer patients, O-glycosylated with glucosylgalactosyl carbohydrate moiety. This modification would require prior hydroxylation on the lysine residue. Proteolytically cleaved at the tripeptide Xaa-Pro-Gln, where Xaa in the P(3) position is mostly lysine. The endoprotease may be of microbial origin. In terms of processing, pyroglutamate formation occurs on terminal Gln residues of cleaved peptides. Pyroglutamate formation found on at least Gln-398 and Gln-400.

The protein localises to the secreted. In Homo sapiens (Human), this protein is Basic salivary proline-rich protein 2 (PRB2).